The following is a 290-amino-acid chain: Pyridoxal 5'-phosphate synthase subunit PdxS (290 aa).

Asp22 contacts D-ribose 5-phosphate. Lys79 serves as the catalytic Schiff-base intermediate with D-ribose 5-phosphate. Gly151 contacts D-ribose 5-phosphate. A D-glyceraldehyde 3-phosphate-binding site is contributed by Arg163. D-ribose 5-phosphate contacts are provided by residues Gly212 and 233-234 (GS).

It belongs to the PdxS/SNZ family. In the presence of PdxT, forms a dodecamer of heterodimers.

It carries out the reaction aldehydo-D-ribose 5-phosphate + D-glyceraldehyde 3-phosphate + L-glutamine = pyridoxal 5'-phosphate + L-glutamate + phosphate + 3 H2O + H(+). It participates in cofactor biosynthesis; pyridoxal 5'-phosphate biosynthesis. Catalyzes the formation of pyridoxal 5'-phosphate from ribose 5-phosphate (RBP), glyceraldehyde 3-phosphate (G3P) and ammonia. The ammonia is provided by the PdxT subunit. Can also use ribulose 5-phosphate and dihydroxyacetone phosphate as substrates, resulting from enzyme-catalyzed isomerization of RBP and G3P, respectively. This Clostridium botulinum (strain Langeland / NCTC 10281 / Type F) protein is Pyridoxal 5'-phosphate synthase subunit PdxS.